We begin with the raw amino-acid sequence, 528 residues long: Ivanolysin (528 aa).

The N-terminal stretch at 1–23 is a signal peptide; that stretch reads MKKIMLLLMTLLLVSLPLAQEAQ. 4 consecutive transmembrane segments (beta stranded) span residues 213–226, 233–242, 311–320, and 328–340; these read ESQL…AFKA, VNFGAISEGK, STRVKAAFDT, and KGDT…IQNA. The short motif at 482–492 is the Conserved undecapeptide element; the sequence is ECTGLAWEWWR. Residues 514-515 carry the Cholesterol binding motif; it reads TL.

This sequence belongs to the cholesterol-dependent cytolysin family. Homooligomeric pore complex of 35 to 50 subunits; when inserted in the host membrane.

It is found in the secreted. It localises to the host membrane. A cholesterol-dependent toxin that causes cytolysis by forming pores in cholesterol containing host membranes. After binding to target membranes, the protein undergoes a major conformation change, leading to its insertion in the host membrane and formation of an oligomeric pore complex. Cholesterol is required for binding to host membranes, membrane insertion and pore formation; cholesterol binding is mediated by a Thr-Leu pair in the C-terminus. Can be reversibly inactivated by oxidation. This Listeria ivanovii protein is Ivanolysin (ilo).